The chain runs to 215 residues: Urease accessory protein UreG (215 aa).

15-22 (GPVGSGKT) lines the GTP pocket.

Belongs to the SIMIBI class G3E GTPase family. UreG subfamily. Homodimer. UreD, UreF and UreG form a complex that acts as a GTP-hydrolysis-dependent molecular chaperone, activating the urease apoprotein by helping to assemble the nickel containing metallocenter of UreC. The UreE protein probably delivers the nickel.

It is found in the cytoplasm. Functionally, facilitates the functional incorporation of the urease nickel metallocenter. This process requires GTP hydrolysis, probably effectuated by UreG. The sequence is that of Urease accessory protein UreG from Alcanivorax borkumensis (strain ATCC 700651 / DSM 11573 / NCIMB 13689 / SK2).